We begin with the raw amino-acid sequence, 351 residues long: Methionine import ATP-binding protein MetN (351 aa).

The 240-residue stretch at 2-241 (IVTEALTKAF…PQHAVTRAFV (240 aa)) folds into the ABC transporter domain. 38 to 45 (GRSGAGKS) lines the ATP pocket.

Belongs to the ABC transporter superfamily. Methionine importer (TC 3.A.1.24) family. In terms of assembly, the complex is composed of two ATP-binding proteins (MetN), two transmembrane proteins (MetI) and a solute-binding protein (MetQ).

It localises to the cell inner membrane. The catalysed reaction is L-methionine(out) + ATP + H2O = L-methionine(in) + ADP + phosphate + H(+). The enzyme catalyses D-methionine(out) + ATP + H2O = D-methionine(in) + ADP + phosphate + H(+). In terms of biological role, part of the ABC transporter complex MetNIQ involved in methionine import. Responsible for energy coupling to the transport system. The polypeptide is Methionine import ATP-binding protein MetN (Rhodospirillum rubrum (strain ATCC 11170 / ATH 1.1.1 / DSM 467 / LMG 4362 / NCIMB 8255 / S1)).